A 403-amino-acid chain; its full sequence is Argininosuccinate synthase (403 aa).

Residues 12-20 (AYSGGLDTS) and A39 each bind ATP. Y91 is a binding site for L-citrulline. G121 is a binding site for ATP. T123, N127, and D128 together coordinate L-aspartate. N127 provides a ligand contact to L-citrulline. 5 residues coordinate L-citrulline: R131, S180, S189, E265, and Y277.

The protein belongs to the argininosuccinate synthase family. Type 1 subfamily. In terms of assembly, homotetramer.

Its subcellular location is the cytoplasm. It catalyses the reaction L-citrulline + L-aspartate + ATP = 2-(N(omega)-L-arginino)succinate + AMP + diphosphate + H(+). It participates in amino-acid biosynthesis; L-arginine biosynthesis; L-arginine from L-ornithine and carbamoyl phosphate: step 2/3. The sequence is that of Argininosuccinate synthase from Buchnera aphidicola subsp. Acyrthosiphon pisum (strain 5A).